The chain runs to 433 residues: 23S rRNA (uracil(1939)-C(5))-methyltransferase RlmD (433 aa).

The TRAM domain occupies arginine 10–arginine 68. Cysteine 81, cysteine 87, cysteine 90, and cysteine 162 together coordinate [4Fe-4S] cluster. S-adenosyl-L-methionine contacts are provided by glutamine 265, phenylalanine 294, asparagine 299, glutamate 315, asparagine 342, and aspartate 363. Cysteine 389 functions as the Nucleophile in the catalytic mechanism.

This sequence belongs to the class I-like SAM-binding methyltransferase superfamily. RNA M5U methyltransferase family. RlmD subfamily.

It carries out the reaction uridine(1939) in 23S rRNA + S-adenosyl-L-methionine = 5-methyluridine(1939) in 23S rRNA + S-adenosyl-L-homocysteine + H(+). In terms of biological role, catalyzes the formation of 5-methyl-uridine at position 1939 (m5U1939) in 23S rRNA. This chain is 23S rRNA (uracil(1939)-C(5))-methyltransferase RlmD, found in Shigella dysenteriae serotype 1 (strain Sd197).